Here is a 354-residue protein sequence, read N- to C-terminus: Uroporphyrinogen decarboxylase (354 aa).

Residues 28–32, D78, Y155, S210, and H325 contribute to the substrate site; that span reads RQAGR.

It belongs to the uroporphyrinogen decarboxylase family. Homodimer.

The protein resides in the cytoplasm. It catalyses the reaction uroporphyrinogen III + 4 H(+) = coproporphyrinogen III + 4 CO2. Its pathway is porphyrin-containing compound metabolism; protoporphyrin-IX biosynthesis; coproporphyrinogen-III from 5-aminolevulinate: step 4/4. Catalyzes the decarboxylation of four acetate groups of uroporphyrinogen-III to yield coproporphyrinogen-III. This Trichodesmium erythraeum (strain IMS101) protein is Uroporphyrinogen decarboxylase.